We begin with the raw amino-acid sequence, 94 residues long: NADH dehydrogenase [ubiquinone] iron-sulfur protein 3, mitochondrial (94 aa).

It belongs to the complex I 30 kDa subunit family. As to quaternary structure, core subunit of respiratory chain NADH dehydrogenase (Complex I) which is composed of 45 different subunits. Interacts with NDUFAF3. Interacts with RAB5IF. Found in subcomplexes containing subunits NDUFS2, MT-ND1 and NDUFA13.

The protein resides in the mitochondrion inner membrane. The catalysed reaction is a ubiquinone + NADH + 5 H(+)(in) = a ubiquinol + NAD(+) + 4 H(+)(out). Functionally, core subunit of the mitochondrial membrane respiratory chain NADH dehydrogenase (Complex I) which catalyzes electron transfer from NADH through the respiratory chain, using ubiquinone as an electron acceptor. Essential for the catalytic activity and assembly of complex I. In Mesocricetus auratus (Golden hamster), this protein is NADH dehydrogenase [ubiquinone] iron-sulfur protein 3, mitochondrial.